Here is a 2227-residue protein sequence, read N- to C-terminus: Genome polyprotein (2227 aa).

Short sequence motifs ((L)YPX(n)L motif) lie at residues 167-171 (YPHGL) and 200-205 (YPVWEL). The involved in P1-2A pentamerization stretch occupies residues 766–836 (MMSRIAAGDL…PRKKKGLFSQ (71 aa)). The helical transmembrane segment at 1010 to 1030 (VTVEIINTVLCFVKSGILLYV) threads the bilayer. The tract at residues 1043-1070 (IGLLRVMNYVDIGCSVISCGKVFSKMLE) is membrane-penetrating ability. Residues 1127 to 1152 (KKKDILNILKDNQQKIEKAIEEADKF) adopt a coiled-coil conformation. The 163-residue stretch at 1204–1366 (HQKLKNLGSI…SFSKNPHNDM (163 aa)) folds into the SF3 helicase domain. 1230 to 1237 (GKRGGGKS) contacts ATP. The chain crosses the membrane as a helical span at residues 1462–1482 (WVAVGAAVGILGVLVGGWFVY). At Tyr1499 the chain carries O-(5'-phospho-RNA)-tyrosine. In terms of domain architecture, Peptidase C3 spans 1514 to 1728 (DPVESQSTLE…VAKLVTQEMF (215 aa)). Residues His1563, Asp1603, and Cys1691 each act as for protease 3C activity in the active site. The 122-residue stretch at 1976-2097 (DVGLDLDFSA…VFSRDVQIDN (122 aa)) folds into the RdRp catalytic domain.

Belongs to the picornaviridae polyprotein family. Homodimer. Homomultimer; probably interacts with membranes in a multimeric form. Seems to assemble into amyloid-like fibers. In terms of assembly, homodimer. Monomer. Interacts with protein 3CD. As to quaternary structure, interacts with host ACBD3. Interacts with protein 3AB. In terms of assembly, interacts with human MAVS. As to quaternary structure, homodimer; disulfide-linked. Homopentamer. Homooligomer. In terms of assembly, interacts with capsid protein VP2. Interacts with capsid protein VP3. As to quaternary structure, interacts with capsid protein VP1. Interacts with capsid protein VP3. Interacts with capsid protein VP1. Interacts with capsid protein VP2. In terms of processing, specific enzymatic cleavages by viral protease in vivo yield a variety of precursors and mature proteins. Polyprotein processing intermediates are produced, such as P1-2A which is a functional precursor of the structural proteins, VP0 which is a VP4-VP2 precursor, VP1-2A precursor, 3ABC precursor which is a stable and catalytically active precursor of 3A, 3B and 3C proteins, 3AB and 3CD precursors. The assembly signal 2A is removed from VP1-2A by a host protease, possibly host Cathepsin L. This cleavage occurs over a region of 3 amino-acids probably generating VP1 proteins with heterogeneous C-termini. During virion maturation, immature virions are rendered infectious following cleavage of VP0 into VP4 and VP2. This maturation seems to be an autocatalytic event triggered by the presence of RNA in the capsid and is followed by a conformational change of the particle. Post-translationally, the assembly signal 2A is removed from VP1-2A by a host protease, possibly host Cathepsin L in naked virions. This cleavage does not occur in enveloped virions. This cleavage occurs over a region of 3 amino-acids probably generating VP1 proteins with heterogeneous C-termini. In terms of processing, VPg is uridylylated prior to priming replication into VPg-pUpU. Unlike other picornaviruses, does not seem to be myristoylated.

It is found in the virion. The protein resides in the host endosome. It localises to the host multivesicular body. The protein localises to the host membrane. Its subcellular location is the host mitochondrion outer membrane. It is found in the host cytoplasm. The protein resides in the host cytoplasmic vesicle membrane. It carries out the reaction RNA(n) + a ribonucleoside 5'-triphosphate = RNA(n+1) + diphosphate. It catalyses the reaction a ribonucleoside 5'-triphosphate + H2O = a ribonucleoside 5'-diphosphate + phosphate + H(+). The enzyme catalyses Selective cleavage of Gln-|-Gly bond in the poliovirus polyprotein. In other picornavirus reactions Glu may be substituted for Gln, and Ser or Thr for Gly.. Capsid proteins VP1, VP2, and VP3 form a closed capsid enclosing the viral positive strand RNA genome. All these proteins contain a beta-sheet structure called beta-barrel jelly roll. Together they form an icosahedral capsid (T=3) composed of 60 copies of each VP1, VP2, and VP3, with a diameter of approximately 300 Angstroms. VP1 is situated at the 12 fivefold axes, whereas VP2 and VP3 are located at the quasi-sixfold axes. The naked capsid interacts with the host receptor HAVCR1 to provide virion attachment to and probably entry into the target cell. Its function is as follows. VP0 precursor is a component of the immature procapsids. In terms of biological role, plays a role in the assembly of the 12 pentamers into an icosahedral structure. Has not been detected in mature virions, supposedly owing to its small size. Functionally, precursor component of immature procapsids that corresponds to an extended form of the structural protein VP1. After maturation, possibly by the host Cathepsin L, the assembly signal 2A is cleaved to give rise to the mature VP1 protein. Functions as a viroporin. Affects membrane integrity and causes an increase in membrane permeability. Involved in host intracellular membrane rearrangements probably to give rise to the viral factories. Does not disrupt calcium homeostasis or glycoprotein trafficking. Antagonizes the innate immune response of the host by suppressing IFN-beta synthesis, which it achieves by interfering with the RIG-I/IFIH1 pathway. Its function is as follows. Affects membrane integrity and causes an increase in membrane permeability. In terms of biological role, associates with and induces structural rearrangements of intracellular membranes. Displays RNA-binding activity. Functionally, the precursor 3ABC is targeted to the mitochondrial membrane where protease 3C activity cleaves and inhibits the host antiviral protein MAVS, thereby disrupting activation of IRF3 through the IFIH1/MDA5 pathway. In vivo, the protease activity of 3ABC precursor is more efficient in cleaving the 2BC precursor than that of protein 3C. The 3ABC precursor may therefore play a role in the proteolytic processing of the polyprotein. Possible viroporin. Interacts with the 3CD precursor and with RNA structures found at both the 5'- and 3'-termini of the viral genome. Since the 3AB precursor contains the hydrophobic domain 3A, it probably anchors the whole viral replicase complex to intracellular membranes on which viral RNA synthesis occurs. Its function is as follows. May serve as membrane anchor to the 3AB and 3ABC precursors via its hydrophobic domain. May interact with RNA. In terms of biological role, acts as a primer for viral RNA replication and remains covalently bound to viral genomic RNA. VPg is uridylylated prior to priming replication into VPg-pUpU. The VPg-pUpU is then used as primer on the genomic RNA poly(A) by the RNA-dependent RNA polymerase to replicate the viral genome. Functionally, cysteine protease that generates mature viral proteins from the precursor polyprotein. In addition to its proteolytic activity, it binds to viral RNA, and thus influences viral genome replication. RNA and substrate bind cooperatively to the protease. Cleaves IKBKG/NEMO to impair innate immune signaling. Cleaves host PABPC1 which may participate in the switch of viral translation to RNA synthesis. Interacts with the 3AB precursor and with RNA structures found at both the 5'- and 3'-termini of the viral genome. Disrupts TLR3 signaling by degrading the host adapter protein TICAM1/TRIF. Its function is as follows. Replicates genomic and antigenomic RNA by recognizing replications specific signals. The polypeptide is Genome polyprotein (Cercopithecus hamlyni (Owl-faced monkey)).